An 891-amino-acid polypeptide reads, in one-letter code: Extended synaptotagmin-3 (891 aa).

The tract at residues 1–30 is disordered; the sequence is MQPEEPCAPSAPGGPDVPERGQRSRDPGPR. The Cytoplasmic segment spans residues 1-32; the sequence is MQPEEPCAPSAPGGPDVPERGQRSRDPGPRLS. Positions 17 to 28 are enriched in basic and acidic residues; that stretch reads VPERGQRSRDPG. Residues 33 to 53 traverse the membrane as a helical segment; it reads GQLLPELYSFVARVLFYLAPV. Y54 is a topological domain (lumenal). The helical transmembrane segment at 55–75 threads the bilayer; sequence LAGYLGLSVTWLLLGALLWMW. Over 76 to 891 the chain is Cytoplasmic; sequence WRRNRRGKLG…ELTADGQPRS (816 aa). Residues 118-295 enclose the SMP-LTD domain; that stretch reads DVERVEWANK…LPNRVTVPVK (178 aa). 2 C2 domains span residues 292–412 and 430–570; these read VPVK…DEWF and SLLT…QLDH. Positions 325, 326, 336, 383, 384, 385, 387, 389, and 390 each coordinate Ca(2+). The tract at residues 652–711 is disordered; the sequence is SAATTDPEPMPEPQGPGPEPKGKDSARGLCESPGKKKNPATTFLTVPGLHSPGPIKSPRP. Positions 659–670 are enriched in pro residues; it reads EPMPEPQGPGPE. The 123-residue stretch at 759-881 folds into the C2 3 domain; that stretch reads RLGEIQLTVR…DLIKGFSQWY (123 aa). Positions 806–813 are required for phosphatidylinositol 4,5-bisphosphate-dependent location at the cell membrane; sequence RRWASRKK.

The protein belongs to the extended synaptotagmin family.

The protein localises to the cell membrane. The protein resides in the endoplasmic reticulum membrane. Its function is as follows. Tethers the endoplasmic reticulum to the cell membrane and promotes the formation of appositions between the endoplasmic reticulum and the cell membrane. Binds glycerophospholipids in a barrel-like domain and may play a role in cellular lipid transport. The protein is Extended synaptotagmin-3 (Esyt3) of Mus musculus (Mouse).